The primary structure comprises 329 residues: Ribosomal RNA small subunit methyltransferase H (329 aa).

Residues 39-41, Asp-57, Phe-84, Asp-100, and Gln-107 each bind S-adenosyl-L-methionine; that span reads GGY. Positions 285–305 are disordered; sequence GPDKDELAQNPRSRSALLRVG.

It belongs to the methyltransferase superfamily. RsmH family.

The protein localises to the cytoplasm. It catalyses the reaction cytidine(1402) in 16S rRNA + S-adenosyl-L-methionine = N(4)-methylcytidine(1402) in 16S rRNA + S-adenosyl-L-homocysteine + H(+). Its function is as follows. Specifically methylates the N4 position of cytidine in position 1402 (C1402) of 16S rRNA. The polypeptide is Ribosomal RNA small subunit methyltransferase H (Ruegeria sp. (strain TM1040) (Silicibacter sp.)).